The sequence spans 397 residues: 1-deoxy-D-xylulose 5-phosphate reductoisomerase (397 aa).

NADPH contacts are provided by Thr10, Gly11, Ser12, Ile13, Gly36, Lys37, Asn38, and Asn124. Lys125 contacts 1-deoxy-D-xylulose 5-phosphate. Glu126 contributes to the NADPH binding site. Asp150 serves as a coordination point for Mn(2+). Residues Ser151, Glu152, Ser186, and His209 each coordinate 1-deoxy-D-xylulose 5-phosphate. Glu152 provides a ligand contact to Mn(2+). Gly215 lines the NADPH pocket. Residues Ser222, Asn227, Lys228, and Glu231 each coordinate 1-deoxy-D-xylulose 5-phosphate. Glu231 is a binding site for Mn(2+).

This sequence belongs to the DXR family. In terms of assembly, homodimer. It depends on Mg(2+) as a cofactor. The cofactor is Mn(2+).

The catalysed reaction is 2-C-methyl-D-erythritol 4-phosphate + NADP(+) = 1-deoxy-D-xylulose 5-phosphate + NADPH + H(+). It functions in the pathway isoprenoid biosynthesis; isopentenyl diphosphate biosynthesis via DXP pathway; isopentenyl diphosphate from 1-deoxy-D-xylulose 5-phosphate: step 1/6. In terms of biological role, catalyzes the NADPH-dependent rearrangement and reduction of 1-deoxy-D-xylulose-5-phosphate (DXP) to 2-C-methyl-D-erythritol 4-phosphate (MEP). This chain is 1-deoxy-D-xylulose 5-phosphate reductoisomerase, found in Proteus mirabilis (strain HI4320).